The following is a 208-amino-acid chain: MERELESAGLGPVAGVDEAGRGACCGPISIAACILPSDLDGVGLDRLTDSKKLTEKTRERLYDVIRDVAVSYSIIHISAEDIDRFGIQHANVSGMRRAVAALDVQPGYVLTDAVKVPGLPMPHLPVVKGDQMAKCISAASVLAKVSRDRVLRTLDEEFPGYGLASHKGYGTKAHMTAVSLHGGTPYHRYSYKNVAAAHEQWLKGKDRG.

Positions 11-203 constitute an RNase H type-2 domain; it reads GPVAGVDEAG…VAAAHEQWLK (193 aa). Residues D17, E18, and D112 each contribute to the a divalent metal cation site.

It belongs to the RNase HII family. The cofactor is Mn(2+). Mg(2+) is required as a cofactor.

It localises to the cytoplasm. It catalyses the reaction Endonucleolytic cleavage to 5'-phosphomonoester.. Its function is as follows. Endonuclease that specifically degrades the RNA of RNA-DNA hybrids. In Corynebacterium jeikeium (strain K411), this protein is Ribonuclease HII.